An 81-amino-acid chain; its full sequence is Large ribosomal subunit protein bL27 (81 aa).

Positions 1–11 (MATSKSGGSSK) are enriched in polar residues. The segment at 1-24 (MATSKSGGSSKNGRDSISKRLGVK) is disordered.

It belongs to the bacterial ribosomal protein bL27 family.

This Borrelia duttonii (strain Ly) protein is Large ribosomal subunit protein bL27.